A 409-amino-acid chain; its full sequence is FADH(2)-dependent resorcinol hydroxylase, oxygenase component (409 aa).

The protein belongs to the HpaH/HsaA monooxygenase family. As to quaternary structure, the FADH(2)-dependent resorcinol hydroxylase is composed of two subunits, GraA (the oxygenase component) and GraD (the reductase component). Both subunits are required for activity.

The catalysed reaction is resorcinol + FADH2 + O2 = benzene-1,2,4-triol + FAD + H2O + H(+). It participates in aromatic compound metabolism. Involved in the gamma-resorcylate (2,6-dihydroxybenzoate) catabolism. Oxygenase component of the resorcinol hydroxylase, which catalyzes the FADH(2)-dependent conversion of resorcinol to hydroxyquinol. This Rhizobium sp. (strain MTP-10005) protein is FADH(2)-dependent resorcinol hydroxylase, oxygenase component.